The following is a 348-amino-acid chain: Competence protein ComGA (348 aa).

ATP is bound at residue 145–152; it reads GATGSGKT.

The protein belongs to the GSP E family.

It localises to the cell membrane. Functionally, required for uptake of DNA by competent cells. This chain is Competence protein ComGA (comGA), found in Halalkalibacterium halodurans (strain ATCC BAA-125 / DSM 18197 / FERM 7344 / JCM 9153 / C-125) (Bacillus halodurans).